Reading from the N-terminus, the 426-residue chain is Serine--tRNA ligase (426 aa).

229–231 is a binding site for L-serine; the sequence is TAE. 260-262 is a binding site for ATP; it reads RSE. L-serine is bound at residue E283. An ATP-binding site is contributed by 347–350; it reads EIAS. S383 contacts L-serine.

This sequence belongs to the class-II aminoacyl-tRNA synthetase family. Type-1 seryl-tRNA synthetase subfamily. Homodimer. The tRNA molecule binds across the dimer.

The protein resides in the cytoplasm. It carries out the reaction tRNA(Ser) + L-serine + ATP = L-seryl-tRNA(Ser) + AMP + diphosphate + H(+). It catalyses the reaction tRNA(Sec) + L-serine + ATP = L-seryl-tRNA(Sec) + AMP + diphosphate + H(+). It functions in the pathway aminoacyl-tRNA biosynthesis; selenocysteinyl-tRNA(Sec) biosynthesis; L-seryl-tRNA(Sec) from L-serine and tRNA(Sec): step 1/1. Its function is as follows. Catalyzes the attachment of serine to tRNA(Ser). Is also able to aminoacylate tRNA(Sec) with serine, to form the misacylated tRNA L-seryl-tRNA(Sec), which will be further converted into selenocysteinyl-tRNA(Sec). The chain is Serine--tRNA ligase from Rickettsia bellii (strain RML369-C).